We begin with the raw amino-acid sequence, 495 residues long: Cobyric acid synthase (495 aa).

The 170-residue stretch at Gly-258–Phe-427 folds into the GATase cobBQ-type domain. Residue Cys-339 is the Nucleophile of the active site. His-419 is an active-site residue.

Belongs to the CobB/CobQ family. CobQ subfamily.

Its pathway is cofactor biosynthesis; adenosylcobalamin biosynthesis. Its function is as follows. Catalyzes amidations at positions B, D, E, and G on adenosylcobyrinic A,C-diamide. NH(2) groups are provided by glutamine, and one molecule of ATP is hydrogenolyzed for each amidation. The polypeptide is Cobyric acid synthase (Mycobacterium sp. (strain KMS)).